The primary structure comprises 120 residues: NAD(P)H-quinone oxidoreductase subunit 3 (120 aa).

The next 3 membrane-spanning stretches (helical) occupy residues Phe10–Ile30, Met64–Val84, and Leu89–Ala109.

This sequence belongs to the complex I subunit 3 family. NDH-1 can be composed of about 15 different subunits; different subcomplexes with different compositions have been identified which probably have different functions.

Its subcellular location is the cellular thylakoid membrane. It catalyses the reaction a plastoquinone + NADH + (n+1) H(+)(in) = a plastoquinol + NAD(+) + n H(+)(out). It carries out the reaction a plastoquinone + NADPH + (n+1) H(+)(in) = a plastoquinol + NADP(+) + n H(+)(out). In terms of biological role, NDH-1 shuttles electrons from an unknown electron donor, via FMN and iron-sulfur (Fe-S) centers, to quinones in the respiratory and/or the photosynthetic chain. The immediate electron acceptor for the enzyme in this species is believed to be plastoquinone. Couples the redox reaction to proton translocation, and thus conserves the redox energy in a proton gradient. Cyanobacterial NDH-1 also plays a role in inorganic carbon-concentration. The chain is NAD(P)H-quinone oxidoreductase subunit 3 from Prochlorococcus marinus (strain MIT 9215).